The sequence spans 1192 residues: Probable ATP-binding protein BrxC (1192 aa).

This sequence belongs to the BrxC family.

BREX systems (bacteriophage exclusion) provide immunity against bacteriophage. A core protein of a type 1 BREX system. This system allows phage adsorption but prevents phage DNA replication, without degradation of the phage DNA. Methylation of bacterial DNA by PglX probably guides self/non-self discrimination. When the brxA-brxB-brxC-pglX and pglZ-brxL operons are transformed into a susceptible B.subtilis strain (BEST7003) they confer resistance to bacteriophages SPbeta, SP16, Zeta, phi3T and SP02 and partial protection to phages SP01 and SP82G (these include lytic and temperate phage). They do not protect against phages phi105, rho10 or rho14. Additionally confers a very slight reduction in efficiency of plasmid transformation. This is Probable ATP-binding protein BrxC from Bacillus cereus (strain H3081.97).